Reading from the N-terminus, the 217-residue chain is MEDKFEIGRIIRAKNISDAWYRGLNIIWNHGQVITDERGSQIREFMDLMVVIENPYTDRIPEDTAWNEERLEEYAKQLISGENAQDFEYTYGQRLRNWNEEVDQIEYVIEKLQESPTSRRATAVTWIPPVDTKVNEVPCMILDDFKIRDGKVHLTTLFRSHDFGGAYPANLYGLSKLLEYVAGRVGVEPGMITTVSISAHVYDHDWDMVENIVKGIN.

Residue Cys-139 is part of the active site.

The protein belongs to the thymidylate synthase family. Archaeal-type ThyA subfamily. As to quaternary structure, monomer.

The protein resides in the cytoplasm. The protein operates within pyrimidine metabolism; dTTP biosynthesis. May catalyze the biosynthesis of dTMP using an unknown cosubstrate. The polypeptide is Putative thymidylate synthase (Methanosarcina acetivorans (strain ATCC 35395 / DSM 2834 / JCM 12185 / C2A)).